The sequence spans 1096 residues: Serine-repeat antigen protein 3 (1096 aa).

The first 21 residues, 1–21 (MARLSSIVFIICLLLCNNAIS), serve as a signal peptide directing secretion. Residues 28-205 (PSSGGTLSGG…RSPPPQVNNI (178 aa)) are disordered. Low complexity predominate over residues 77-97 (NSDSTGDSSLGSTGSNGSQPA). A glycan (N-linked (GlcNAc...) asparagine) is linked at Asn92. Residues 102–113 (KEPEPTTPKEPE) are compositionally biased toward basic and acidic residues. Residues 123–147 (VTPQKTAETASGKQVSPTPSENPPS) show a composition bias toward polar residues. The span at 149–161 (DTPKPESSSEKKV) shows a compositional bias: basic and acidic residues. 8 N-linked (GlcNAc...) asparagine glycosylation sites follow: Asn204, Asn607, Asn637, Asn662, Asn671, Asn712, Asn892, and Asn951. Disordered regions lie at residues 916–952 (EAKNDDENDQNYGNLDVSGQSENHQNDPKNPQPQANS) and 964–1006 (NQRT…ASAN). Polar residues-rich tracts occupy residues 925 to 952 (QNYGNLDVSGQSENHQNDPKNPQPQANS) and 964 to 975 (NQRTADSNPNAQ). A compositionally biased stretch (low complexity) spans 976–1006 (STPSPNTTVTDTVNSNTANSNTANSNTASAN). Residues Asn981 and Asn1039 are each glycosylated (N-linked (GlcNAc...) asparagine).

The protein belongs to the peptidase C1 family. Post-translationally, proteolytically cleaved in both blood and liver stage parasites. Precursor of 130 kDa is processed into 72 kDa and 55 kDa forms. Proteolytically cleaved by SUB1.

The protein resides in the cell membrane. It localises to the parasitophorous vacuole. It is found in the secreted. Its subcellular location is the host cytoplasm. Putative cysteine protease. Probably involved in merozoite release from the parasitophorous vacuole during liver stages. The sequence is that of Serine-repeat antigen protein 3 from Plasmodium berghei (strain Anka).